A 538-amino-acid polypeptide reads, in one-letter code: Solute carrier family 2, facilitated glucose transporter member 9 (538 aa).

Residues 1–34 lie on the Cytoplasmic side of the membrane; that stretch reads MDSRELALASLMCDTGGPGELSVGHQQRRTKKWS. Residue Ser-3 is modified to Phosphoserine. Residues 35 to 54 form a helical membrane-spanning segment; sequence FSLVVAALVGAFGSSFLYGY. Asn-55 and Asn-71 each carry an N-linked (GlcNAc...) asparagine glycan. The Extracellular segment spans residues 55-88; sequence NLSVVNAPTPYIKAFYNGTWYRRHGQPIDPDTLT. A helical membrane pass occupies residues 89-109; it reads LLWSVTVSIFAIGGLVGTLMV. Over 110–120 the chain is Cytoplasmic; the sequence is KMIGKFLGRKS. The chain crosses the membrane as a helical span at residues 121–143; it reads TLLVNNGFAISAALLMACSLRAG. The Extracellular segment spans residues 144–148; that stretch reads TFEML. A helical transmembrane segment spans residues 149–170; sequence IVGRFIMGVDGGIALSALPMYL. Topologically, residues 171 to 181 are cytoplasmic; it reads NEISPKEIRGS. A helical transmembrane segment spans residues 182 to 200; the sequence is LGQVTAIFICIGVFSGQLL. The Extracellular segment spans residues 201–211; it reads GLPELLGREST. The chain crosses the membrane as a helical span at residues 212-233; it reads WPYLFGVIIVPALVQLASLPFL. Topologically, residues 234-297 are cytoplasmic; sequence PESPRYLLFE…LLRAPFVRWQ (64 aa). Residues 298-319 form a helical membrane-spanning segment; sequence VITVIITMASYQLCGLNAIWFY. Over 320-333 the chain is Extracellular; the sequence is TNSIFGKAGIPQDK. A helical membrane pass occupies residues 334–356; it reads IPYITLSTGGIETLAAIFSGLVI. Topologically, residues 357–362 are cytoplasmic; it reads ERLGRR. The chain crosses the membrane as a helical span at residues 363–385; that stretch reads PLLIGGFGLMALFFGTLTATLTL. Residues 386–390 are Extracellular-facing; it reads QDQAP. Residues 391–418 traverse the membrane as a helical segment; the sequence is WVPYLSIVCILAIIASFCSGPGGIPFIL. Residues 419–429 lie on the Cytoplasmic side of the membrane; sequence TGEFFQQSERP. The chain crosses the membrane as a helical span at residues 430-453; sequence AAFMIAGTVNWLSNFAVGLLFPFI. Topologically, residues 454-458 are extracellular; sequence QKSLD. Residues 459–480 traverse the membrane as a helical segment; that stretch reads SYCFLVFATICIAGATYFYFVL. Over 481–538 the chain is Cytoplasmic; sequence PETKNRTHAEISQAFAKRNKAQPPEVKADSAMTEEKANSQTEPDSSSTLDSYGQNKIV. A disordered region spans residues 495–538; sequence FAKRNKAQPPEVKADSAMTEEKANSQTEPDSSSTLDSYGQNKIV. A compositionally biased stretch (polar residues) spans 518-538; that stretch reads NSQTEPDSSSTLDSYGQNKIV.

It belongs to the major facilitator superfamily. Sugar transporter (TC 2.A.1.1) family. In terms of processing, N-glycosylated. Highly expressed in the intestine, with high expression in the jejunum and ileum, the segments of the intestine that perform the majority of urate excretion. Isoform 1: Widely expressed. Isoform 1: In kidney, expressed at low levels in proximal tubules. Isoform 2: Primarily expressed in liver and kidney; with specific expression in distal convoluted and connecting tubules of kidney.

The protein resides in the basolateral cell membrane. Its subcellular location is the apical cell membrane. The enzyme catalyses urate(out) = urate(in). In terms of biological role, high-capacity urate transporter, which may play a role in the urate reabsorption by proximal tubules. May have a residual high-affinity, low-capacity glucose and fructose transporter activity. Transports urate at rates 45- to 60-fold faster than glucose. Does not transport galactose. May mediate small uptake of adenine but not of other nucleobases. In Mus musculus (Mouse), this protein is Solute carrier family 2, facilitated glucose transporter member 9.